The sequence spans 739 residues: NAD(P)H-quinone oxidoreductase subunit 5, chloroplastic (739 aa).

16 helical membrane-spanning segments follow: residues 9–29 (WIIP…LLLV), 39–59 (IWAF…ADLA), 89–109 (IDPL…MVLI), 125–145 (FAYM…SNLI), 147–167 (IYIF…FWFT), 185–205 (GDFG…SFEF), 224–244 (LFAA…SAQF), 258–278 (TPIS…FLVA), 280–300 (LLPL…IGII), 327–347 (LGYI…FHLI), 354–374 (ALLF…VGYS), 396–416 (TTFF…CFWS), 425–445 (WLYS…TAFY), 544–564 (LFPM…GIPF), 603–623 (IYSV…YGSV), and 719–739 (YIFL…FFSF).

The protein belongs to the complex I subunit 5 family. In terms of assembly, NDH is composed of at least 16 different subunits, 5 of which are encoded in the nucleus.

It localises to the plastid. Its subcellular location is the chloroplast thylakoid membrane. The enzyme catalyses a plastoquinone + NADH + (n+1) H(+)(in) = a plastoquinol + NAD(+) + n H(+)(out). The catalysed reaction is a plastoquinone + NADPH + (n+1) H(+)(in) = a plastoquinol + NADP(+) + n H(+)(out). NDH shuttles electrons from NAD(P)H:plastoquinone, via FMN and iron-sulfur (Fe-S) centers, to quinones in the photosynthetic chain and possibly in a chloroplast respiratory chain. The immediate electron acceptor for the enzyme in this species is believed to be plastoquinone. Couples the redox reaction to proton translocation, and thus conserves the redox energy in a proton gradient. The polypeptide is NAD(P)H-quinone oxidoreductase subunit 5, chloroplastic (ndhF) (Acorus calamus var. americanus (American sweet flag)).